A 333-amino-acid chain; its full sequence is MTSKSHWKLLALALVLVVVMVWYSISREDRYIEFFYFPISEKKEPCFQGEAERQASKIFGNRSREQPIFLQLKDYFWVKTPSTYELPFGTKGSEDLLLRVLAITSYSIPESIKSLECRRCVVVGNGHRLRNSSLGGVINKYDVVIRLNNAPVAGYEGDVGSKTTIRLFYPESAHFDPKIENNPDTLLVLVAFKAMDFHWIETILSDKKRVRKGFWKQPPLIWDVNPKQVRILNPFFMEIAADKLLSLPIQQPRKIKQKPTTGLLAITLALHLCDLVHIAGFGYPDASNKKQTIHYYEQITLKSMAGSGHNVSQEAIAIKRMLEMGAVKNLTYF.

Over 1–8 (MTSKSHWK) the chain is Cytoplasmic. Residues 9–26 (LLALALVLVVVMVWYSIS) form a helical; Signal-anchor for type II membrane protein membrane-spanning segment. Topologically, residues 27 to 333 (REDRYIEFFY…MGAVKNLTYF (307 aa)) are lumenal. Asn-61, Asn-131, Asn-310, and Asn-329 each carry an N-linked (GlcNAc...) asparagine glycan. A disulfide bond links Cys-120 and Cys-273.

Belongs to the glycosyltransferase 29 family. Broadly expressed among tissues with highest levels in the small intestine and colon.

Its subcellular location is the golgi apparatus. It is found in the golgi stack membrane. It catalyses the reaction a beta-D-galactosyl-(1-&gt;3)-N-acetyl-beta-D-galactosaminyl derivative + CMP-N-acetyl-beta-neuraminate = an N-acetyl-alpha-neuraminyl-(2-&gt;3)-beta-D-galactosyl-(1-&gt;3)-N-acetyl-beta-D-galactosaminyl derivative + CMP + H(+). The enzyme catalyses a beta-D-galactosyl-(1-&gt;3)-N-acetyl-alpha-D-galactosaminyl derivative + CMP-N-acetyl-beta-neuraminate = an N-acetyl-alpha-neuraminyl-(2-&gt;3)-beta-D-galactosyl-(1-&gt;3)-N-acetyl-alpha-D-galactosaminyl derivative + CMP + H(+). The catalysed reaction is a beta-D-galactosyl-(1-&gt;4)-N-acetyl-beta-D-glucosaminyl derivative + CMP-N-acetyl-beta-neuraminate = an N-acetyl-alpha-neuraminyl-(2-&gt;3)-beta-D-galactosyl-(1-&gt;4)-N-acetyl-beta-D-glucosaminyl derivative + CMP + H(+). It carries out the reaction a ganglioside GM1 (d18:1(4E)) + CMP-N-acetyl-beta-neuraminate = a ganglioside GD1a (d18:1(4E)) + CMP + H(+). It catalyses the reaction a ganglioside GA1 (d18:1(4E)) + CMP-N-acetyl-beta-neuraminate = a ganglioside GM1b (d18:1(4E)) + CMP + H(+). The enzyme catalyses a ganglioside GT1c (d18:1(4E)) + CMP-N-acetyl-beta-neuraminate = a ganglioside GQ1c (d18:1(4E)) + CMP + H(+). The catalysed reaction is a neolactoside nLc4Cer + CMP-N-acetyl-beta-neuraminate = a neolactoside IV(3)-alpha-NeuAc-nLc4Cer + CMP + H(+). It carries out the reaction a neolactoside nLc4Cer(d18:1(4E)) + CMP-N-acetyl-beta-neuraminate = a neolactoside IV(3)-alpha-NeuAc-nLc4Cer(d18:1(4E)) + CMP + H(+). The protein operates within protein modification; protein glycosylation. In terms of biological role, a beta-galactoside alpha2-3 sialyltransferase involved in terminal sialylation of glycoproteins and glycolipids. Catalyzes the transfer of sialic acid (N-acetyl-neuraminic acid; Neu5Ac) from the nucleotide sugar donor CMP-Neu5Ac onto acceptor Galbeta-(1-&gt;3)-GalNAc- and Galbeta-(1-&gt;4)-GlcNAc-terminated glycoconjugates through an alpha2-3 linkage. Plays a major role in hemostasis. Responsible for sialylation of plasma VWF/von Willebrand factor, preventing its recognition by asialoglycoprotein receptors (ASGPR) and subsequent clearance. Regulates ASGPR-mediated clearance of platelets. Participates in the biosynthesis of the sialyl Lewis X epitopes, both on O- and N-glycans, which are recognized by SELE/E-selectin, SELP/P-selectin and SELL/L-selectin. Essential for selectin-mediated rolling and adhesion of leukocytes during extravasation. Contributes to adhesion and transendothelial migration of neutrophils likely through terminal sialylation of CXCR2. In glycosphingolipid biosynthesis, sialylates GM1 and GA1 gangliosides to form GD1a and GM1b, respectively. Metabolizes brain c-series ganglioside GT1c forming GQ1c. Synthesizes ganglioside LM1 (IV3Neu5Ac-nLc4Cer), a major structural component of peripheral nerve myelin. In Mus musculus (Mouse), this protein is CMP-N-acetylneuraminate-beta-galactosamide-alpha-2,3-sialyltransferase 4 (St3gal4).